A 352-amino-acid polypeptide reads, in one-letter code: Zinc finger CCCH domain-containing protein 42 (352 aa).

The 79-residue stretch at 36–114 (AYVYVGGIPF…RTIKVDHCGA (79 aa)) folds into the RRM domain. 2 C3H1-type zinc fingers span residues 130 to 157 (REARGVCRAFQRGECTRGDSCKFSHDEK) and 180 to 207 (REGRGVCRAFQRGECTRGDSCKFSHDEK). The segment at 156–179 (EKRAANTGWGHEEDRSSKWDHDKN) is disordered. 3 stretches are compositionally biased toward basic and acidic residues: residues 210–230 (ATTGWGHEEDRSSKWDQDKLN), 243–296 (GDFK…RSGR), and 304–352 (RHND…DRRR). Residues 210–352 (ATTGWGHEED…DSLRREDRRR (143 aa)) are disordered. Residues 319-348 (RAQDWEKRKAESRRDRNDREEKDRDSLRRE) adopt a coiled-coil conformation.

This Arabidopsis thaliana (Mouse-ear cress) protein is Zinc finger CCCH domain-containing protein 42.